The sequence spans 121 residues: General odorant-binding protein 72 (121 aa).

Cystine bridges form between C45–C101 and C90–C110.

This sequence belongs to the PBP/GOBP family.

It localises to the secreted. Its function is as follows. Present in the aqueous fluid surrounding olfactory sensory dendrites and are thought to aid in the capture and transport of hydrophobic odorants into and through this fluid. The protein is General odorant-binding protein 72 (Obp72) of Anopheles gambiae (African malaria mosquito).